The sequence spans 340 residues: tRNA-specific 2-thiouridylase MnmA (340 aa).

ATP is bound by residues 6–13 (AMSGGVDS) and M32. C92 serves as the catalytic Nucleophile. A disulfide bond links C92 and C186. G116 contributes to the ATP binding site. The interaction with tRNA stretch occupies residues 134 to 136 (KDQ). The Cysteine persulfide intermediate role is filled by C186. The interaction with tRNA stretch occupies residues 288–289 (RY).

This sequence belongs to the MnmA/TRMU family.

It is found in the cytoplasm. The enzyme catalyses S-sulfanyl-L-cysteinyl-[protein] + uridine(34) in tRNA + AH2 + ATP = 2-thiouridine(34) in tRNA + L-cysteinyl-[protein] + A + AMP + diphosphate + H(+). Functionally, catalyzes the 2-thiolation of uridine at the wobble position (U34) of tRNA, leading to the formation of s(2)U34. This chain is tRNA-specific 2-thiouridylase MnmA, found in Campylobacter concisus (strain 13826).